The primary structure comprises 329 residues: Lipoyl synthase (329 aa).

The segment at 1–23 (MTDLTATPAPAEPAASAYDPTAK) is disordered. Residues Cys76, Cys81, Cys87, Cys102, Cys106, Cys109, and Ser316 each contribute to the [4Fe-4S] cluster site. The 219-residue stretch at 87–305 (CFGKGTATFM…EEEAYKMGFT (219 aa)) folds into the Radical SAM core domain.

It belongs to the radical SAM superfamily. Lipoyl synthase family. Requires [4Fe-4S] cluster as cofactor.

The protein resides in the cytoplasm. It catalyses the reaction [[Fe-S] cluster scaffold protein carrying a second [4Fe-4S](2+) cluster] + N(6)-octanoyl-L-lysyl-[protein] + 2 oxidized [2Fe-2S]-[ferredoxin] + 2 S-adenosyl-L-methionine + 4 H(+) = [[Fe-S] cluster scaffold protein] + N(6)-[(R)-dihydrolipoyl]-L-lysyl-[protein] + 4 Fe(3+) + 2 hydrogen sulfide + 2 5'-deoxyadenosine + 2 L-methionine + 2 reduced [2Fe-2S]-[ferredoxin]. The protein operates within protein modification; protein lipoylation via endogenous pathway; protein N(6)-(lipoyl)lysine from octanoyl-[acyl-carrier-protein]: step 2/2. In terms of biological role, catalyzes the radical-mediated insertion of two sulfur atoms into the C-6 and C-8 positions of the octanoyl moiety bound to the lipoyl domains of lipoate-dependent enzymes, thereby converting the octanoylated domains into lipoylated derivatives. The polypeptide is Lipoyl synthase (Burkholderia pseudomallei (strain 1106a)).